The following is a 104-amino-acid chain: Secretoglobin family 3A member 1 (104 aa).

Residues 1 to 21 (MKLTTTFLVLCVALLSDSGVA) form the signal peptide.

This sequence belongs to the secretoglobin family. UGRP subfamily. Homodimer; disulfide-linked. As to expression, highly expressed in lung, where it localizes to epithelial cells lining the trachea and bronchi. Expression in lung is mainly restricted to bronchi, submucosal glands of the trachea, and tracheal epithelium, with little expression in terminal bronchioles. Expressed in uterus where it localizes to epithelial cells of the uterine glands. Also detected in heart, stomach and small intestine.

Its subcellular location is the secreted. Its function is as follows. Secreted cytokine-like protein. Inhibits cell growth in vitro. This is Secretoglobin family 3A member 1 (Scgb3a1) from Mus musculus (Mouse).